The chain runs to 303 residues: MATH domain and coiled-coil domain-containing protein At3g58250 (303 aa).

One can recognise an MATH domain in the interval 8–135 (KKKFSWVIKN…KGELKIVVEI (128 aa)). Residues 231–287 (KLDWLKKKLDQVTQKKEKEAAGETRMHEIGEELKDLKLKCSDLEAQLDKEKADVLAA) are a coiled coil.

This is MATH domain and coiled-coil domain-containing protein At3g58250 from Arabidopsis thaliana (Mouse-ear cress).